The following is a 1184-amino-acid chain: DNA polymerase III subunit alpha (1184 aa).

This sequence belongs to the DNA polymerase type-C family. DnaE subfamily. The Pol III holoenzyme complex contains at least 10 different subunits organized into 3 functionally essential subassemblies: the Pol III core, the beta sliding clamp processivity factor and the clamp-loading complex. The Pol III core (subunits alpha, epsilon and theta) contains the polymerase and the 3'-5' exonuclease proofreading activities. The polymerase is tethered to the template via the dimeric beta sliding clamp processivity factor. The clamp loader (also called gamma complex) assembles the beta sliding clamp onto the primed template and plays a central role in the organization and communication at the replication fork. The clamp-loading complex contains delta, delta', psi and chi, and 3 copies of either or both of two different DnaX proteins, gamma and tau. The DNA replisome complex has a single clamp loader (3 tau and 1 each of delta, delta', psi and chi subunits) which binds 3 Pol III cores (1 core on the leading strand and 2 on the lagging strand) each with a beta sliding clamp dimer. Interacts with the beta-sliding clamp (DnaN). Co-immunoprecipitates with DarG in the presence and absence of darT.

It localises to the cytoplasm. It catalyses the reaction DNA(n) + a 2'-deoxyribonucleoside 5'-triphosphate = DNA(n+1) + diphosphate. Its function is as follows. DNA polymerase III is a complex, multichain enzyme responsible for most of the replicative synthesis in bacteria. Pol III also exhibits 3' to 5' exonuclease activity. The alpha chain is the DNA polymerase. This is DNA polymerase III subunit alpha (dnaE1) from Mycobacterium tuberculosis (strain ATCC 25618 / H37Rv).